A 492-amino-acid chain; its full sequence is Dipeptide permease D (492 aa).

13 helical membrane passes run 14–34 (VVAL…LLIL), 49–69 (ALFS…GYLA), 91–111 (LVLG…AIIV), 138–158 (GGFS…PIAC), 167–187 (WAMG…IFLC), 212–232 (NWGW…VLFW), 236–256 (SVYA…RIYL), 269–289 (LIVV…QGGS), 312–332 (MFQS…AWLV), 344–364 (IWGK…ILTL), 379–399 (LMVL…PVAM), 413–433 (VLTG…AGVI), and 458–478 (VFSQ…VIWL).

It belongs to the major facilitator superfamily. Proton-dependent oligopeptide transporter (POT/PTR) (TC 2.A.17) family. DtpD subfamily.

Its subcellular location is the cell inner membrane. In terms of biological role, probable proton-dependent permease that transports dipeptides. In Klebsiella pneumoniae (strain 342), this protein is Dipeptide permease D.